Reading from the N-terminus, the 234-residue chain is uncharacterized protein (234 aa).

Transmembrane regions (helical) follow at residues 5–23, 38–60, 73–92, 127–149, 170–192, and 197–217; these read LFYI…LWSF, IPTA…GFWV, AHIQ…AHGW, AITL…YIWL, GVAI…TVIS, and TQAG…ALAF.

It localises to the cell membrane. This is an uncharacterized protein from Archaeoglobus fulgidus (strain ATCC 49558 / DSM 4304 / JCM 9628 / NBRC 100126 / VC-16).